A 359-amino-acid polypeptide reads, in one-letter code: Methyltransferase eqxD (359 aa).

Residues 198 to 199, Asp224, 248 to 249, Arg264, and Arg265 each bind S-adenosyl-L-methionine; these read GG and SF.

Belongs to the class I-like SAM-binding methyltransferase superfamily. Cation-independent O-methyltransferase family.

It carries out the reaction trichosetin + S-adenosyl-L-methionine = equisetin + S-adenosyl-L-homocysteine + H(+). Its pathway is mycotoxin biosynthesis. Its function is as follows. Methyltransferase; part of the gene cluster that mediates the biosynthesis of equisetin, a trans-fused decalin-containing tetramic acid with antimicrobial activity. The PKS module of eqxS together with the enoylreductase eqxC catalyze the formation of the polyketide unit which is then conjugated to L-serine by the condensation domain of the eqxS NRPS module. Activity of the Dieckmann cyclase domain (RED) results in release of the Dieckmann product intermediate. Diels-Alderase eqx3 is involved in endo-selective Diels-Alder cycloaddition to form the decalin ring, leading to the production of N-desmethylequisetin also called trichosetin. Subsequent N-methylation is carried out by eqxD to give equisetin. The chain is Methyltransferase eqxD from Fusarium heterosporum.